We begin with the raw amino-acid sequence, 611 residues long: Alpha-1,2-mannosyltransferase ALG9 (611 aa).

The span at 1–10 shows a compositional bias: basic residues; sequence MASRRARQRL. The interval 1 to 51 is disordered; that stretch reads MASRRARQRLKGGGGGGGGGGDAGPAAEKLEQLGSREAGAEPRPESGNKAG. The Lumenal segment spans residues 1–135; it reads MASRRARQRL…FHARILQTNK (135 aa). Gly residues predominate over residues 11 to 23; the sequence is KGGGGGGGGGGDA. N-linked (GlcNAc...) asparagine glycosylation is present at Asn-77. Residues 136–156 traverse the membrane as a helical segment; it reads ILVFYFLRCLLAFVSCVCELY. The Cytoplasmic portion of the chain corresponds to 157–171; that stretch reads FYKAVCKKFGLHVSR. The helical transmembrane segment at 172–192 threads the bilayer; sequence MMLAFLVLSTGMFCSSSAFLP. Over 193 to 213 the chain is Lumenal; the sequence is SSFCMYTTLIAMTGWYMDKTP. A helical membrane pass occupies residues 214 to 234; it reads IAVLGVAAGAILGWPFSAALG. Residues 235–249 lie on the Cytoplasmic side of the membrane; that stretch reads LPIAFDLLARKHRWK. A helical transmembrane segment spans residues 250-270; it reads SFLLWSLVALALFLVPVVVID. Over 271-310 the chain is Lumenal; it reads SYYYGKLVVAPLNIVLYNVFTSHGPDLYGTEPWYFYLING. A helical transmembrane segment spans residues 311 to 331; sequence FLNFNVAFALALLVLPLTFLM. The Cytoplasmic portion of the chain corresponds to 332–342; that stretch reads EYLLQRFHVQN. Residues 343–363 form a helical membrane-spanning segment; the sequence is LGHPYWLTLAPMYIWFIIFFI. Over 364-370 the chain is Lumenal; the sequence is QPHKEER. A helical membrane pass occupies residues 371 to 391; that stretch reads FLFPVYPLICLCGAVALSALQ. Topologically, residues 392-405 are cytoplasmic; that stretch reads KCYHFVFQRYRLEH. Residues 406–426 traverse the membrane as a helical segment; that stretch reads YTVTSNWLALGTVFLFGLLSF. Topologically, residues 427–611 are lumenal; the sequence is SRSVALFRGY…AKPSRKKSGG (185 aa). N-linked (GlcNAc...) asparagine glycans are attached at residues Asn-550 and Asn-593.

This sequence belongs to the glycosyltransferase 22 family.

It localises to the endoplasmic reticulum membrane. The enzyme catalyses an alpha-D-Man-(1-&gt;2)-alpha-D-Man-(1-&gt;2)-alpha-D-Man-(1-&gt;3)-[alpha-D-Man-(1-&gt;3)-alpha-D-Man-(1-&gt;6)]-beta-D-Man-(1-&gt;4)-beta-D-GlcNAc-(1-&gt;4)-alpha-D-GlcNAc-diphospho-di-trans,poly-cis-dolichol + a di-trans,poly-cis-dolichyl beta-D-mannosyl phosphate = an alpha-D-Man-(1-&gt;2)-alpha-D-Man-(1-&gt;2)-alpha-D-Man-(1-&gt;3)-[alpha-D-Man-(1-&gt;2)-alpha-D-Man-(1-&gt;3)-alpha-D-Man-(1-&gt;6)]-beta-D-Man-(1-&gt;4)-beta-D-GlcNAc-(1-&gt;4)-alpha-D-GlcNAc-diphospho-di-trans,poly-cis-dolichol + a di-trans,poly-cis-dolichyl phosphate + H(+). It carries out the reaction an alpha-D-Man-(1-&gt;2)-alpha-D-Man-(1-&gt;2)-alpha-D-Man-(1-&gt;3)-[alpha-D-Man-(1-&gt;2)-alpha-D-Man-(1-&gt;3)-[alpha-D-Man-(1-&gt;6)]-alpha-D-Man-(1-&gt;6)]-beta-D-Man-(1-&gt;4)-beta-D-GlcNAc-(1-&gt;4)-alpha-D-GlcNAc-diphospho-di-trans,poly-cis-dolichol + a di-trans,poly-cis-dolichyl beta-D-mannosyl phosphate = an alpha-D-Man-(1-&gt;2)-alpha-D-Man-(1-&gt;2)-alpha-D-Man-(1-&gt;3)-[alpha-D-Man-(1-&gt;2)-alpha-D-Man-(1-&gt;3)-[alpha-D-Man-(1-&gt;2)-alpha-D-Man-(1-&gt;6)]-alpha-D-Man-(1-&gt;6)]-beta-D-Man-(1-&gt;4)-beta-D-GlcNAc-(1-&gt;4)-alpha-D-GlcNAc-diphospho-di-trans,poly-cis-dolichol + a di-trans,poly-cis-dolichyl phosphate + H(+). The protein operates within protein modification; protein glycosylation. Functionally, mannosyltransferase that operates in the biosynthetic pathway of dolichol-linked oligosaccharides, the glycan precursors employed in protein asparagine (N)-glycosylation. The assembly of dolichol-linked oligosaccharides begins on the cytosolic side of the endoplasmic reticulum membrane and finishes in its lumen. The sequential addition of sugars to dolichol pyrophosphate produces dolichol-linked oligosaccharides containing fourteen sugars, including two GlcNAcs, nine mannoses and three glucoses. Once assembled, the oligosaccharide is transferred from the lipid to nascent proteins by oligosaccharyltransferases. In the lumen of the endoplasmic reticulum, catalyzes the addition of the seventh and ninth alpha-1,2-linked mannose residues to Man(6)GlcNAc(2)-PP-dolichol and Man(8)GlcNAc(2)-PP-dolichol respectively. In Mus musculus (Mouse), this protein is Alpha-1,2-mannosyltransferase ALG9.